Consider the following 276-residue polypeptide: Cytoplasmic envelopment protein 1 (276 aa).

It belongs to the herpesviridae cytoplasmic envelopment protein 1 family.

It localises to the virion. The protein localises to the virion tegument. The protein resides in the host cytoplasm. It is found in the host Golgi apparatus. Its function is as follows. Plays a critical role in cytoplasmic virus egress. Participates in the final step of tegumentation and envelope acquisition within the host cytoplasm. This Equus caballus (Horse) protein is Cytoplasmic envelopment protein 1 (42).